A 216-amino-acid polypeptide reads, in one-letter code: Phosphatidylserine decarboxylase proenzyme (216 aa).

Serine 182 functions as the Schiff-base intermediate with substrate; via pyruvic acid in the catalytic mechanism. Serine 182 is modified (pyruvic acid (Ser); by autocatalysis).

Belongs to the phosphatidylserine decarboxylase family. PSD-A subfamily. In terms of assembly, heterodimer of a large membrane-associated beta subunit and a small pyruvoyl-containing alpha subunit. Pyruvate serves as cofactor. Is synthesized initially as an inactive proenzyme. Formation of the active enzyme involves a self-maturation process in which the active site pyruvoyl group is generated from an internal serine residue via an autocatalytic post-translational modification. Two non-identical subunits are generated from the proenzyme in this reaction, and the pyruvate is formed at the N-terminus of the alpha chain, which is derived from the carboxyl end of the proenzyme. The post-translation cleavage follows an unusual pathway, termed non-hydrolytic serinolysis, in which the side chain hydroxyl group of the serine supplies its oxygen atom to form the C-terminus of the beta chain, while the remainder of the serine residue undergoes an oxidative deamination to produce ammonia and the pyruvoyl prosthetic group on the alpha chain.

It is found in the cell membrane. It carries out the reaction a 1,2-diacyl-sn-glycero-3-phospho-L-serine + H(+) = a 1,2-diacyl-sn-glycero-3-phosphoethanolamine + CO2. It functions in the pathway phospholipid metabolism; phosphatidylethanolamine biosynthesis; phosphatidylethanolamine from CDP-diacylglycerol: step 2/2. Functionally, catalyzes the formation of phosphatidylethanolamine (PtdEtn) from phosphatidylserine (PtdSer). The polypeptide is Phosphatidylserine decarboxylase proenzyme (Burkholderia pseudomallei (strain 1106a)).